A 144-amino-acid chain; its full sequence is Putative sugar phosphate isomerase RT0290 (144 aa).

Residue histidine 12 participates in substrate binding. Histidine 101 (proton donor) is an active-site residue. A substrate-binding site is contributed by arginine 135.

This sequence belongs to the LacAB/RpiB family.

The protein is Putative sugar phosphate isomerase RT0290 of Rickettsia typhi (strain ATCC VR-144 / Wilmington).